Here is a 327-residue protein sequence, read N- to C-terminus: GTPase Obg (327 aa).

Residues 1–159 (MKFLDQVKIY…YVIWLQLKTI (159 aa)) form the Obg domain. The OBG-type G domain occupies 160 to 327 (ADVGIVGLPN…IKAKLLSYVS (168 aa)). Residues 166–173 (GLPNAGKS), 191–195 (FTTLN), 212–215 (DIPG), 279–282 (NKTD), and 308–310 (STL) contribute to the GTP site. 2 residues coordinate Mg(2+): S173 and T193.

It belongs to the TRAFAC class OBG-HflX-like GTPase superfamily. OBG GTPase family. Monomer. Mg(2+) serves as cofactor.

It localises to the cytoplasm. Functionally, an essential GTPase which binds GTP, GDP and possibly (p)ppGpp with moderate affinity, with high nucleotide exchange rates and a fairly low GTP hydrolysis rate. Plays a role in control of the cell cycle, stress response, ribosome biogenesis and in those bacteria that undergo differentiation, in morphogenesis control. The sequence is that of GTPase Obg from Pelagibacter ubique (strain HTCC1062).